We begin with the raw amino-acid sequence, 870 residues long: Leucine--tRNA ligase (870 aa).

Positions 42-52 (PYPSGKLHMGH) match the 'HIGH' region motif. The short motif at 629 to 633 (KMSKS) is the 'KMSKS' region element. Lysine 632 contacts ATP.

The protein belongs to the class-I aminoacyl-tRNA synthetase family.

The protein resides in the cytoplasm. The catalysed reaction is tRNA(Leu) + L-leucine + ATP = L-leucyl-tRNA(Leu) + AMP + diphosphate. This Dechloromonas aromatica (strain RCB) protein is Leucine--tRNA ligase.